The primary structure comprises 379 residues: Putative acetyl-CoA C-acetyltransferase VraB (379 aa).

Cys86 serves as the catalytic Acyl-thioester intermediate. His338 acts as the Proton acceptor in catalysis.

The protein belongs to the thiolase-like superfamily. Thiolase family.

The protein is Putative acetyl-CoA C-acetyltransferase VraB (vraB) of Staphylococcus aureus (strain MSSA476).